An 804-amino-acid chain; its full sequence is Protein SEY1 homolog 1 (804 aa).

Over 1-638 (MEQIITGEGQ…SVLASQNNEH (638 aa)) the chain is Cytoplasmic. The GB1/RHD3-type G domain maps to 28–245 (GTDYHMVSII…EENYLFKEKS (218 aa)). 38–45 (GCQSSGKS) is a binding site for GTP. The chain crosses the membrane as a helical span at residues 639 to 659 (IPPWAWFLFLFSCSDYILWWL). At 660–662 (SNP) the chain is on the lumenal side. A helical membrane pass occupies residues 663–683 (LLFSLTVLFGGTYLVLNQLGL). The Cytoplasmic segment spans residues 684-804 (WDTAVQKLLD…RKRVRVGTLV (121 aa)). A disordered region spans residues 706 to 804 (PDENNETETN…RKRVRVGTLV (99 aa)). Polar residues predominate over residues 751–791 (QGLTKTESNVTFANVSNANDEQSLTKNNTEDSLNTGSSSSG). Basic residues predominate over residues 792-804 (QRHRKRVRVGTLV).

This sequence belongs to the TRAFAC class dynamin-like GTPase superfamily. GB1/RHD3 GTPase family. RHD3 subfamily.

The protein localises to the endoplasmic reticulum membrane. Functionally, probable GTP-binding protein that may be involved in cell development. In Trichomonas vaginalis (strain ATCC PRA-98 / G3), this protein is Protein SEY1 homolog 1.